Reading from the N-terminus, the 180-residue chain is Adenine phosphoribosyltransferase (180 aa).

The protein belongs to the purine/pyrimidine phosphoribosyltransferase family. In terms of assembly, homodimer.

Its subcellular location is the cytoplasm. It carries out the reaction AMP + diphosphate = 5-phospho-alpha-D-ribose 1-diphosphate + adenine. It functions in the pathway purine metabolism; AMP biosynthesis via salvage pathway; AMP from adenine: step 1/1. Its function is as follows. Catalyzes a salvage reaction resulting in the formation of AMP, that is energically less costly than de novo synthesis. The polypeptide is Adenine phosphoribosyltransferase (Mycobacterium avium (strain 104)).